A 157-amino-acid polypeptide reads, in one-letter code: Putative pre-16S rRNA nuclease (157 aa).

The protein belongs to the YqgF nuclease family.

The protein localises to the cytoplasm. Could be a nuclease involved in processing of the 5'-end of pre-16S rRNA. The protein is Putative pre-16S rRNA nuclease of Orientia tsutsugamushi (strain Ikeda) (Rickettsia tsutsugamushi).